We begin with the raw amino-acid sequence, 331 residues long: Tryptophan--tRNA ligase 1 (331 aa).

ATP is bound by residues 9-11 (KPT) and 17-18 (GN). The 'HIGH' region motif lies at 10–18 (PTGHLTLGN). Position 137 (aspartate 137) interacts with L-tryptophan. ATP-binding positions include 149-151 (GDD), valine 188, and 197-201 (KMGKS). The 'KMSKS' region signature appears at 197–201 (KMGKS).

It belongs to the class-I aminoacyl-tRNA synthetase family. In terms of assembly, homodimer.

The protein resides in the cytoplasm. It catalyses the reaction tRNA(Trp) + L-tryptophan + ATP = L-tryptophyl-tRNA(Trp) + AMP + diphosphate + H(+). Catalyzes the attachment of tryptophan to tRNA(Trp). This is Tryptophan--tRNA ligase 1 from Streptomyces avermitilis (strain ATCC 31267 / DSM 46492 / JCM 5070 / NBRC 14893 / NCIMB 12804 / NRRL 8165 / MA-4680).